The following is a 312-amino-acid chain: Ribosomal protein L11 methyltransferase (312 aa).

4 residues coordinate S-adenosyl-L-methionine: Thr160, Gly181, Asp203, and Asn246.

The protein belongs to the methyltransferase superfamily. PrmA family.

The protein resides in the cytoplasm. The catalysed reaction is L-lysyl-[protein] + 3 S-adenosyl-L-methionine = N(6),N(6),N(6)-trimethyl-L-lysyl-[protein] + 3 S-adenosyl-L-homocysteine + 3 H(+). Functionally, methylates ribosomal protein L11. This is Ribosomal protein L11 methyltransferase from Staphylococcus aureus (strain COL).